A 138-amino-acid polypeptide reads, in one-letter code: Small ribosomal subunit protein uS11 (138 aa).

A compositionally biased stretch (polar residues) spans 1-12 (MAKQSAKGSTTT). Positions 1–37 (MAKQSAKGSTTTKRQRGKRREKKNVPRGQAHIQSTFN) are disordered. The segment covering 13-22 (KRQRGKRREK) has biased composition (basic residues).

The protein belongs to the universal ribosomal protein uS11 family. In terms of assembly, part of the 30S ribosomal subunit. Interacts with proteins S7 and S18. Binds to IF-3.

In terms of biological role, located on the platform of the 30S subunit, it bridges several disparate RNA helices of the 16S rRNA. Forms part of the Shine-Dalgarno cleft in the 70S ribosome. The protein is Small ribosomal subunit protein uS11 of Roseiflexus castenholzii (strain DSM 13941 / HLO8).